The primary structure comprises 352 residues: MVTPCPASPGSPAAGAGRRDSHQNLRAPVKKSRRPCLRRKKPLRPLNACSLPGDSGVCDLFESPSSSSDGADSPAVSAARDCSSLLNPAQPLTALDLQTFREYGQSCYDFRKAQENLFHPRESLARQPQVTAESRCKLLSWLLQVHRQFGLSFESLCLTVNTLDRFLLTTPVAADCFQLLGVTCLLIACKQVEVHPPRLKQLLALCGGAFSRQQLCNLECIVLHKLHFSLGAPTINFFLEHFTQWRMEAGQAEVTEALEAQTLARGVAELSLTDYAFTTYTPSLMAICCLALADGLLQHQHEMDLRLGEHPEATLQDCLGKLQTLVSINSSSLPRILPPQIWERCSLPQSWQ.

The segment at 1 to 40 (MVTPCPASPGSPAAGAGRRDSHQNLRAPVKKSRRPCLRRK) is disordered. The segment covering 28–40 (PVKKSRRPCLRRK) has biased composition (basic residues). The residue at position 83 (Ser-83) is a Phosphoserine.

It belongs to the cyclin family. Present in respiratory cells (at protein level). Expressed in multiciliated tissue in brain and fallopian tube (at protein level). Highly expressed in oocytes.

The protein resides in the cytoplasm. The protein localises to the nucleus. Its subcellular location is the nucleolus. Its function is as follows. Specifically required for generation of multiciliated cells, possibly by promoting a cell cycle state compatible with centriole amplification and maturation. Acts downstream of MCIDAS to promote mother centriole amplification and maturation in preparation for apical docking. May be involved in apoptosis in lymphoid cells; however, this result requires additional evidences in vivo. May be involved in oocyte meiotic resumption in oocytes. The protein is Cyclin-O of Mus musculus (Mouse).